The chain runs to 392 residues: Iripin-1 (392 aa).

A signal peptide spans 1-16; that stretch reads MKPLVPLLFLLVSCRA. N-linked (GlcNAc...) asparagine glycosylation is found at Asn-104, Asn-196, and Asn-265.

It belongs to the serpin family. In terms of assembly, interacts with human KLKB1. Interacts with human ST14. Interacts with human PLG (plasmin). Highly expressed in salivary gland. Expressed in midgut and ovary.

It localises to the secreted. Serine protease inhibitor that modulates blood feeding of ticks on vertebrate species. Modestly inhibits human trypsin, plasma kallikrein (KLKB1), matriptase (ST14) and plasmin (PLG) via a classic serpin inhibitory mechanism. Modestly reduces enzymatic activity of human alpha-chymotrypsin, coagulation factor Xa (F10), factor XIIa (F12), cathepsin G (CTSG), tPA/tissue-type plasminogen activator (PLAT) and uPA/urokinase-type plasminogen activator (PLAU). Probably acts as a substrate rather than an inhibitor for the human neutrophil elastase (ELANE) and thus reduces its enzymatic activity in in vitro assays. Decreases expression of adhesion molecules VCAM1 and CD99 on the surface of human cells. Increases the production of chemokines for neutrophils and monocytes, such as KC/CXCL1, MIP-2/CXCL2 and MIP-1/CCL2, and anti-inflammatory cytokine IL10 in mouse inflammation models. Reduces the recruitment of mouse neutrophils and monocytes to the site of inflammation. Decreases expression of CXCR2 on the surface of mouse neutrophils. Increases expression of integrin ITGAM/ITGB2 on the surface of mouse neutrophils. The chain is Iripin-1 from Ixodes ricinus (Common tick).